A 988-amino-acid polypeptide reads, in one-letter code: Next to BRCA1 gene 1 protein (988 aa).

Residues 4-86 enclose the PB1 domain; sequence QVTLNVTFKN…NQLQMQVHEG (83 aa). Phosphoserine is present on Ser-117. The interval 126-150 is disordered; that stretch reads MKTTEEPAPEQCSSAPCDTDQPQDK. The ZZ-type zinc finger occupies 213-265; that stretch reads SWHIACSHCQKRIVGVRYQCSLCPSYNICEDCEAGPYTHDTNHVLLKLRRPVV. Zn(2+) is bound by residues Cys-218, Cys-221, Cys-232, Cys-235, Cys-241, Cys-244, His-251, and His-255. ATG8 family proteins-binding regions lie at residues 543 to 637 and 745 to 756; these read ASER…PASV and ASSEDYIIILPE. A Phosphothreonine modification is found at Thr-587. Ser-591, Ser-597, and Ser-626 each carry phosphoserine. Residues 611–644 are disordered; it reads ESEGAGFKAPPDSTVSAKRKAETPASVEETEEDL. Disordered regions lie at residues 768–822 and 841–900; these read MYSS…TSQP and RSAP…HHNG. Residues 795–807 show a composition bias toward basic and acidic residues; that stretch reads TEARERLPERESQ. The segment covering 808–822 has biased composition (polar residues); sequence PQEQSISDILTTSQP. Ser-860 is modified (phosphoserine). The region spanning 935-979 is the UBA domain; it reads SEDQTTALMAHLFEMGFCDRQLNLRLLRKHNYNILQVVTELLQVN.

Homooligomer and heterooligomer. Interacts with TRIM55. Interacts with titin/TTN. Interacts with RNF29, USP8, MAP1LC3A, MAP1LC3B, MAP1LC3C, GABARAP, GABARAPL1 and GABARAPL2. Binds to ubiquitin and ubiquitinated proteins. Interacts with SQSTM1. Interacts with TAX1BP1. Interacts with IRF3; this interaction mediates autophagic degradation of IRF3. Interacts with IL12A and IL12B. Phosphorylated by GSK3A; this phosphorylation inhibits NBR1 involvement in the formation of ubiquitinated protein aggregates. Expressed in brain.

Its subcellular location is the cytoplasm. It is found in the cytoplasmic vesicle. It localises to the autophagosome. The protein localises to the lysosome. The protein resides in the myofibril. Its subcellular location is the sarcomere. It is found in the m line. Ubiquitin-binding autophagy adapter that participates in different processes including host defense or intracellular homeostasis. Possesses a double function during the selective autophagy by acting as a shuttle bringing ubiquitinated proteins to autophagosomes and also by participating in the formation of protein aggregates. Plays a role in the regulation of the innate immune response by modulating type I interferon production and targeting ubiquitinated IRF3 for autophagic degradation. In response to oxidative stress, promotes an increase in SQSTM1 levels, phosphorylation, and body formation by preventing its autophagic degradation. In turn, activates the KEAP1-NRF2/NFE2L2 antioxidant pathway. Also plays non-autophagy role by mediating the shuttle of IL-12 to late endosome for subsequent secretion. This is Next to BRCA1 gene 1 protein (Nbr1) from Mus musculus (Mouse).